A 328-amino-acid polypeptide reads, in one-letter code: Probable cell division protein WhiA (328 aa).

Positions 275-308 (SLEELGRLAEPPMTKDAVAGRIRRLLSMADKRAE) form a DNA-binding region, H-T-H motif.

The protein belongs to the WhiA family.

In terms of biological role, involved in cell division and chromosome segregation. This chain is Probable cell division protein WhiA, found in Corynebacterium jeikeium (strain K411).